The chain runs to 38 residues: Large ribosomal subunit protein bL36 (38 aa).

This sequence belongs to the bacterial ribosomal protein bL36 family.

The polypeptide is Large ribosomal subunit protein bL36 (Synechocystis sp. (strain ATCC 27184 / PCC 6803 / Kazusa)).